Here is an 81-residue protein sequence, read N- to C-terminus: ATP synthase subunit c, chloroplastic (81 aa).

2 helical membrane-spanning segments follow: residues 3–23 (PIIC…GAIG) and 57–77 (LAFM…IIFA).

This sequence belongs to the ATPase C chain family. In terms of assembly, F-type ATPases have 2 components, F(1) - the catalytic core - and F(0) - the membrane proton channel. F(1) has five subunits: alpha(3), beta(3), gamma(1), delta(1), epsilon(1). F(0) has four main subunits: a(1), b(1), b'(1) and c(10-14). The alpha and beta chains form an alternating ring which encloses part of the gamma chain. F(1) is attached to F(0) by a central stalk formed by the gamma and epsilon chains, while a peripheral stalk is formed by the delta, b and b' chains.

It localises to the plastid. The protein resides in the chloroplast thylakoid membrane. F(1)F(0) ATP synthase produces ATP from ADP in the presence of a proton or sodium gradient. F-type ATPases consist of two structural domains, F(1) containing the extramembraneous catalytic core and F(0) containing the membrane proton channel, linked together by a central stalk and a peripheral stalk. During catalysis, ATP synthesis in the catalytic domain of F(1) is coupled via a rotary mechanism of the central stalk subunits to proton translocation. Functionally, key component of the F(0) channel; it plays a direct role in translocation across the membrane. A homomeric c-ring of between 10-14 subunits forms the central stalk rotor element with the F(1) delta and epsilon subunits. This chain is ATP synthase subunit c, chloroplastic, found in Euglena gracilis.